We begin with the raw amino-acid sequence, 213 residues long: MPEENIFLFVPNLIGYARIVFAIISFYFMPCCPFTASSFYLLSGLLDAFDGHAARALNQGTRFGAMLDMLTDRCATMCLLVNLALLYPRATLLFQLSMSLDVASHWLHLHSSVVRGSESHKMIDLSGNPVLRIYYTSRPALFTLCAGNELFYCLLYLFNFSEGPLVGSVGLFRMGLWITAPIALLKSIISVIHLVTAARNMAALDAADRAKKK.

Over 1 to 5 (MPEEN) the chain is Cytoplasmic. A helical transmembrane segment spans residues 6-26 (IFLFVPNLIGYARIVFAIISF). Residue Y27 is a topological domain, lumenal. Residues 28-48 (FMPCCPFTASSFYLLSGLLDA) traverse the membrane as a helical segment. D47 and D50 together coordinate Mg(2+). Topologically, residues 49 to 73 (FDGHAARALNQGTRFGAMLDMLTDR) are cytoplasmic. A CDP-1,2-diacyl-sn-glycerol-binding residues include G51, R55, and T61. Residues D68 and D72 each coordinate Mg(2+). D72 serves as the catalytic Proton acceptor. Residues 74–94 (CATMCLLVNLALLYPRATLLF) form a helical membrane-spanning segment. Position 95 (Q95) is a topological domain, lumenal. The chain crosses the membrane as a helical span at residues 96-116 (LSMSLDVASHWLHLHSSVVRG). The Cytoplasmic portion of the chain corresponds to 117–139 (SESHKMIDLSGNPVLRIYYTSRP). A helical transmembrane segment spans residues 140–160 (ALFTLCAGNELFYCLLYLFNF). Residues 161–174 (SEGPLVGSVGLFRM) lie on the Lumenal side of the membrane. The helical transmembrane segment at 175–195 (GLWITAPIALLKSIISVIHLV) threads the bilayer. The Cytoplasmic segment spans residues 196 to 213 (TAARNMAALDAADRAKKK).

This sequence belongs to the CDP-alcohol phosphatidyltransferase class-I family. It depends on Mn(2+) as a cofactor. Mg(2+) serves as cofactor. As to expression, detected in liver (at protein level). Widely expressed. Highly expressed in the brain and kidney; lower levels in heart, spleen, lung, liver, skeletal muscle and testis.

It localises to the endoplasmic reticulum membrane. The protein localises to the cell membrane. The catalysed reaction is a CDP-1,2-diacyl-sn-glycerol + myo-inositol = a 1,2-diacyl-sn-glycero-3-phospho-(1D-myo-inositol) + CMP + H(+). Catalyzes the biosynthesis of phosphatidylinositol (PtdIns) as well as PtdIns:inositol exchange reaction. May thus act to reduce an excessive cellular PtdIns content. The exchange activity is due to the reverse reaction of PtdIns synthase and is dependent on CMP, which is tightly bound to the enzyme. The chain is CDP-diacylglycerol--inositol 3-phosphatidyltransferase from Rattus norvegicus (Rat).